We begin with the raw amino-acid sequence, 284 residues long: Formamidopyrimidine-DNA glycosylase (284 aa).

The active-site Schiff-base intermediate with DNA is Pro2. Glu3 (proton donor) is an active-site residue. Catalysis depends on Lys58, which acts as the Proton donor; for beta-elimination activity. DNA contacts are provided by His101, Arg120, and Arg163. The FPG-type zinc-finger motif lies at 248 to 284; that stretch reads RVYDRENAPCVTAGCPDVVRRVVQSGRSSFYCPSCQR. Arg274 (proton donor; for delta-elimination activity) is an active-site residue.

Belongs to the FPG family. In terms of assembly, monomer. Zn(2+) serves as cofactor.

It carries out the reaction Hydrolysis of DNA containing ring-opened 7-methylguanine residues, releasing 2,6-diamino-4-hydroxy-5-(N-methyl)formamidopyrimidine.. The catalysed reaction is 2'-deoxyribonucleotide-(2'-deoxyribose 5'-phosphate)-2'-deoxyribonucleotide-DNA = a 3'-end 2'-deoxyribonucleotide-(2,3-dehydro-2,3-deoxyribose 5'-phosphate)-DNA + a 5'-end 5'-phospho-2'-deoxyribonucleoside-DNA + H(+). Its function is as follows. Involved in base excision repair of DNA damaged by oxidation or by mutagenic agents. Acts as a DNA glycosylase that recognizes and removes damaged bases. Has a preference for oxidized purines, such as 7,8-dihydro-8-oxoguanine (8-oxoG). Has AP (apurinic/apyrimidinic) lyase activity and introduces nicks in the DNA strand. Cleaves the DNA backbone by beta-delta elimination to generate a single-strand break at the site of the removed base with both 3'- and 5'-phosphates. The protein is Formamidopyrimidine-DNA glycosylase of Dinoroseobacter shibae (strain DSM 16493 / NCIMB 14021 / DFL 12).